The primary structure comprises 371 residues: Deoxyhypusine synthase (371 aa).

Residues 107–111, 133–135, glutamate 139, and aspartate 240 each bind NAD(+); these read SNLIS and TTG. Residue 138-139 coordinates spermidine; the sequence is EE. Aspartate 245 is a binding site for spermidine. Residue glycine 287 coordinates NAD(+). Spermidine is bound at residue histidine 292. 312 to 313 serves as a coordination point for NAD(+); the sequence is TA. Residues 318-320 and 327-333 contribute to the spermidine site; these read GSD and EAVSWGK. Lysine 333 (nucleophile) is an active-site residue. Position 346–347 (346–347) interacts with NAD(+); it reads DA.

This sequence belongs to the deoxyhypusine synthase family. NAD(+) serves as cofactor. Expressed in shoot tips.

It carries out the reaction [eIF5A protein]-L-lysine + spermidine = [eIF5A protein]-deoxyhypusine + propane-1,3-diamine. It functions in the pathway protein modification; eIF5A hypusination. In terms of biological role, catalyzes the NAD-dependent oxidative cleavage of spermidine and the subsequent transfer of the butylamine moiety of spermidine to the epsilon-amino group of a specific lysine residue of the eIF-5A precursor protein to form the intermediate deoxyhypusine residue. Also able to produce homospermidine from putrescine. This Senecio vernalis (Spring groundsel) protein is Deoxyhypusine synthase (DHS1).